Here is a 116-residue protein sequence, read N- to C-terminus: uncharacterized protein (116 aa).

The protein belongs to the BolA/IbaG family.

The protein localises to the mitochondrion. This is an uncharacterized protein from Schizosaccharomyces pombe (strain 972 / ATCC 24843) (Fission yeast).